A 203-amino-acid polypeptide reads, in one-letter code: MSNESIKAEQDLIQEGVESEVSTEEASLIDELTQANFRIEELEQLLADALAKVEEQKDSVIRAAAEVDNIRRRAAMDVEKANKFALEKFANELLPVLDNMERALQGTNPQDETTKAIYEGVELTQKSFLTAVAKFGVKPIDPQGQAFNPDQHQAIGMQPSAEYPANTVMLVMQKGYELNSRLLRPAMVMVSQGGPSQEINIEA.

Residues 1–10 (MSNESIKAEQ) show a composition bias toward basic and acidic residues. The interval 1–20 (MSNESIKAEQDLIQEGVESE) is disordered.

This sequence belongs to the GrpE family. As to quaternary structure, homodimer.

It localises to the cytoplasm. In terms of biological role, participates actively in the response to hyperosmotic and heat shock by preventing the aggregation of stress-denatured proteins, in association with DnaK and GrpE. It is the nucleotide exchange factor for DnaK and may function as a thermosensor. Unfolded proteins bind initially to DnaJ; upon interaction with the DnaJ-bound protein, DnaK hydrolyzes its bound ATP, resulting in the formation of a stable complex. GrpE releases ADP from DnaK; ATP binding to DnaK triggers the release of the substrate protein, thus completing the reaction cycle. Several rounds of ATP-dependent interactions between DnaJ, DnaK and GrpE are required for fully efficient folding. This chain is Protein GrpE, found in Shewanella sp. (strain MR-7).